The primary structure comprises 557 residues: Formate--tetrahydrofolate ligase (557 aa).

66-73 (TPAGEGKS) is a binding site for ATP.

The protein belongs to the formate--tetrahydrofolate ligase family.

The enzyme catalyses (6S)-5,6,7,8-tetrahydrofolate + formate + ATP = (6R)-10-formyltetrahydrofolate + ADP + phosphate. It participates in one-carbon metabolism; tetrahydrofolate interconversion. In Clostridium botulinum (strain Loch Maree / Type A3), this protein is Formate--tetrahydrofolate ligase.